The sequence spans 291 residues: Protease HtpX homolog (291 aa).

The next 2 membrane-spanning stretches (helical) occupy residues 4–24 and 38–58; these read IALFLLTNLAVVVVLGIVASL and LGALLGFAFIMGFGGAIISLL. Histidine 144 lines the Zn(2+) pocket. Residue glutamate 145 is part of the active site. Residue histidine 148 participates in Zn(2+) binding. Helical transmembrane passes span 159 to 179 and 199 to 219; these read LIQGVMNTFVVFLSRVIGYAV and VTTIVLDIVLGFLASMIVAWF. Zn(2+) is bound at residue glutamate 224.

It belongs to the peptidase M48B family. The cofactor is Zn(2+).

Its subcellular location is the cell inner membrane. The polypeptide is Protease HtpX homolog (Paracidovorax citrulli (strain AAC00-1) (Acidovorax citrulli)).